We begin with the raw amino-acid sequence, 419 residues long: Zinc metalloprotease RasP (419 aa).

4 helical membrane-spanning segments follow: residues 4–24 (VIAF…GHLI), 173–193 (IAAG…MLGL), 349–369 (LAAF…PALD), and 391–411 (EAFV…VVTW). Residue His18 coordinates Zn(2+). Residue Glu19 is part of the active site. His22 provides a ligand contact to Zn(2+). In terms of domain architecture, PDZ spans 184–269 (AYVILVMLGL…KLTKYVTPEA (86 aa)).

This sequence belongs to the peptidase M50B family. Zn(2+) is required as a cofactor.

It is found in the cell membrane. Functionally, is responsible for Site-2 cleavage of the RsiW anti-sigma factor. This results, after a third proteolytic step catalyzed by the ClpXP protease, in the release of SigW and the transcription activation of the genes under the control of the sigma-W factor. The sequence is that of Zinc metalloprotease RasP (rasP) from Bacillus licheniformis (strain ATCC 14580 / DSM 13 / JCM 2505 / CCUG 7422 / NBRC 12200 / NCIMB 9375 / NCTC 10341 / NRRL NRS-1264 / Gibson 46).